Consider the following 176-residue polypeptide: ATP synthase subunit delta (176 aa).

This sequence belongs to the ATPase delta chain family. In terms of assembly, F-type ATPases have 2 components, F(1) - the catalytic core - and F(0) - the membrane proton channel. F(1) has five subunits: alpha(3), beta(3), gamma(1), delta(1), epsilon(1). F(0) has three main subunits: a(1), b(2) and c(10-14). The alpha and beta chains form an alternating ring which encloses part of the gamma chain. F(1) is attached to F(0) by a central stalk formed by the gamma and epsilon chains, while a peripheral stalk is formed by the delta and b chains.

It is found in the cell inner membrane. F(1)F(0) ATP synthase produces ATP from ADP in the presence of a proton or sodium gradient. F-type ATPases consist of two structural domains, F(1) containing the extramembraneous catalytic core and F(0) containing the membrane proton channel, linked together by a central stalk and a peripheral stalk. During catalysis, ATP synthesis in the catalytic domain of F(1) is coupled via a rotary mechanism of the central stalk subunits to proton translocation. In terms of biological role, this protein is part of the stalk that links CF(0) to CF(1). It either transmits conformational changes from CF(0) to CF(1) or is implicated in proton conduction. The polypeptide is ATP synthase subunit delta (Campylobacter fetus subsp. fetus (strain 82-40)).